The primary structure comprises 218 residues: Probable transaldolase (218 aa).

Residue Lys87 is the Schiff-base intermediate with substrate of the active site.

The protein belongs to the transaldolase family. Type 3B subfamily.

It localises to the cytoplasm. The enzyme catalyses D-sedoheptulose 7-phosphate + D-glyceraldehyde 3-phosphate = D-erythrose 4-phosphate + beta-D-fructose 6-phosphate. Its pathway is carbohydrate degradation; pentose phosphate pathway; D-glyceraldehyde 3-phosphate and beta-D-fructose 6-phosphate from D-ribose 5-phosphate and D-xylulose 5-phosphate (non-oxidative stage): step 2/3. In terms of biological role, transaldolase is important for the balance of metabolites in the pentose-phosphate pathway. This Cytophaga hutchinsonii (strain ATCC 33406 / DSM 1761 / CIP 103989 / NBRC 15051 / NCIMB 9469 / D465) protein is Probable transaldolase.